The chain runs to 947 residues: Testis-expressed protein 11 (947 aa).

This sequence belongs to the SPO22 family. Interacts with SYCP2. Interacts with PBXIP1; may prevent interaction between PBXIP1 and ESR2. Interacts with SHOC1. Interacts with REDIC1. In terms of tissue distribution, testis-specific.

Its subcellular location is the chromosome. Its function is as follows. Regulator of crossing-over during meiosis. Involved in initiation and/or maintenance of chromosome synapsis and formation of crossovers. In Mus musculus (Mouse), this protein is Testis-expressed protein 11 (Tex11).